Reading from the N-terminus, the 150-residue chain is FAD synthase (150 aa).

ATP is bound by residues 11-12, 16-19, aspartate 96, and tyrosine 124; these read TF and HPGH.

This sequence belongs to the archaeal FAD synthase family. In terms of assembly, homodimer. A divalent metal cation serves as cofactor.

It carries out the reaction FMN + ATP + H(+) = FAD + diphosphate. It functions in the pathway cofactor biosynthesis; FAD biosynthesis; FAD from FMN: step 1/1. Functionally, catalyzes the transfer of the AMP portion of ATP to flavin mononucleotide (FMN) to produce flavin adenine dinucleotide (FAD) coenzyme. The sequence is that of FAD synthase from Methanococcus maripaludis (strain C7 / ATCC BAA-1331).